We begin with the raw amino-acid sequence, 397 residues long: MDDSKRILITKVLKNEVTEALGCTEVGLIGYAISLCNISYPFSIEKIEVTLNNGSFKNAYAVGVPNTKKYGILPAVVGGLLGNSKNKLLIFNDIKYDQKLEDFIKKRLEVKVLDGPLYCGVKIKDTSGKFFESLIKDNHLNVVIPKIEKEKISLEITDFEKEEYKSLELTDFLNYLDEIPEEIINLVEKTIYTNKNLIKGDFLNYGNDILSNMVNKTTSACNTRMTGENMPAMSVAKSGNMGLMATLPIISYDNLTENNFEKLKKSLLLAMLVTIYSTYNSSYLSSMCGCVSKGGMGAVIGLCYYKNGKNLKKLNSAARAFTANLPGIICDGGKVGCALKLASGCFAAYSSLYVEISHENGIVGKNFKECVQNISKISKAMGDLDCDIVKIMSKKEM.

Cys23 acts as the Proton acceptor in catalysis. [4Fe-4S] cluster contacts are provided by Cys288, Cys330, and Cys337.

It belongs to the L-cysteine desulfidase family. In terms of assembly, homotrimer. It depends on [4Fe-4S] cluster as a cofactor.

The catalysed reaction is L-cysteine + H2O = hydrogen sulfide + pyruvate + NH4(+) + H(+). Catalyzes the cleavage of L-cysteine to form 2-aminoprop-2-enoate and sulfide. The former then spontaneously hydrolyzes to pyruvate and NH(3). May be responsible for the production of sulfide required for the biosynthesis of iron-sulfur centers in this archaea. In Methanococcus maripaludis (strain C7 / ATCC BAA-1331), this protein is L-cysteine desulfidase.